Reading from the N-terminus, the 168-residue chain is Bifunctional protein PyrR (168 aa).

The PRPP-binding signature appears at 90–102 (LVLIDDVLMSGRT).

Belongs to the purine/pyrimidine phosphoribosyltransferase family. PyrR subfamily.

The enzyme catalyses UMP + diphosphate = 5-phospho-alpha-D-ribose 1-diphosphate + uracil. In terms of biological role, regulates the transcription of the pyrimidine nucleotide (pyr) operon in response to exogenous pyrimidines. Functionally, also displays a weak uracil phosphoribosyltransferase activity which is not physiologically significant. This chain is Bifunctional protein PyrR, found in Pseudomonas fluorescens (strain ATCC BAA-477 / NRRL B-23932 / Pf-5).